The following is a 360-amino-acid chain: Photosystem II protein D1 2 (360 aa).

3 helical membrane passes run 29–46 (YIGW…AATT), 118–133 (HFLT…EWEL), and 142–156 (WICL…AATA). H118 is a chlorophyll a binding site. Y126 is a binding site for pheophytin a. [CaMn4O5] cluster-binding residues include D170 and E189. Residues 197–218 (FHMLGVAGVFGGSLFSAMHGSL) traverse the membrane as a helical segment. H198 serves as a coordination point for chlorophyll a. A quinone is bound by residues H215 and 264–265 (SF). H215 is a Fe cation binding site. H272 provides a ligand contact to Fe cation. The helical transmembrane segment at 274–288 (FLAAWPVIGIWFTAL) threads the bilayer. [CaMn4O5] cluster contacts are provided by H332, E333, D342, and A344. Positions 345–360 (AGEVAPVALTAPAING) are excised as a propeptide.

Belongs to the reaction center PufL/M/PsbA/D family. PSII is composed of 1 copy each of membrane proteins PsbA, PsbB, PsbC, PsbD, PsbE, PsbF, PsbH, PsbI, PsbJ, PsbK, PsbL, PsbM, PsbT, PsbX, PsbY, PsbZ, Psb30/Ycf12, peripheral proteins PsbO, CyanoQ (PsbQ), PsbU, PsbV and a large number of cofactors. It forms dimeric complexes. It depends on The D1/D2 heterodimer binds P680, chlorophylls that are the primary electron donor of PSII, and subsequent electron acceptors. It shares a non-heme iron and each subunit binds pheophytin, quinone, additional chlorophylls, carotenoids and lipids. D1 provides most of the ligands for the Mn4-Ca-O5 cluster of the oxygen-evolving complex (OEC). There is also a Cl(-1) ion associated with D1 and D2, which is required for oxygen evolution. The PSII complex binds additional chlorophylls, carotenoids and specific lipids. as a cofactor. Post-translationally, tyr-161 forms a radical intermediate that is referred to as redox-active TyrZ, YZ or Y-Z. C-terminally processed by CtpA; processing is essential to allow assembly of the oxygen-evolving complex and thus photosynthetic growth.

Its subcellular location is the cellular thylakoid membrane. The catalysed reaction is 2 a plastoquinone + 4 hnu + 2 H2O = 2 a plastoquinol + O2. In terms of biological role, photosystem II (PSII) is a light-driven water:plastoquinone oxidoreductase that uses light energy to abstract electrons from H(2)O, generating O(2) and a proton gradient subsequently used for ATP formation. It consists of a core antenna complex that captures photons, and an electron transfer chain that converts photonic excitation into a charge separation. The D1/D2 (PsbA/PsbD) reaction center heterodimer binds P680, the primary electron donor of PSII as well as several subsequent electron acceptors. The protein is Photosystem II protein D1 2 of Trichormus variabilis (strain ATCC 29413 / PCC 7937) (Anabaena variabilis).